The chain runs to 108 residues: UPF0102 protein Sbal_4100 (108 aa).

This sequence belongs to the UPF0102 family.

This is UPF0102 protein Sbal_4100 from Shewanella baltica (strain OS155 / ATCC BAA-1091).